We begin with the raw amino-acid sequence, 394 residues long: Elongation factor Tu (394 aa).

In terms of domain architecture, tr-type G spans 10 to 204; it reads KPHVNVGTIG…HLDSYIPEPE (195 aa). The G1 stretch occupies residues 19-26; that stretch reads GHVDHGKT. 19 to 26 provides a ligand contact to GTP; sequence GHVDHGKT. Residue threonine 26 participates in Mg(2+) binding. Residues 60-64 are G2; the sequence is GITIN. The interval 81-84 is G3; it reads DCPG. GTP-binding positions include 81 to 85 and 136 to 139; these read DCPGH and NKCD. Residues 136 to 139 are G4; it reads NKCD. Positions 174-176 are G5; that stretch reads SAL.

This sequence belongs to the TRAFAC class translation factor GTPase superfamily. Classic translation factor GTPase family. EF-Tu/EF-1A subfamily. In terms of assembly, monomer.

It is found in the cytoplasm. The enzyme catalyses GTP + H2O = GDP + phosphate + H(+). Functionally, GTP hydrolase that promotes the GTP-dependent binding of aminoacyl-tRNA to the A-site of ribosomes during protein biosynthesis. This chain is Elongation factor Tu, found in Haemophilus ducreyi (strain 35000HP / ATCC 700724).